Here is a 212-residue protein sequence, read N- to C-terminus: Uracil phosphoribosyltransferase (212 aa).

Residues arginine 78, arginine 103, and aspartate 130 to serine 138 contribute to the 5-phospho-alpha-D-ribose 1-diphosphate site. Residues isoleucine 193 and glycine 198 to alanine 200 each bind uracil. Aspartate 199 lines the 5-phospho-alpha-D-ribose 1-diphosphate pocket.

It belongs to the UPRTase family. Mg(2+) serves as cofactor.

The enzyme catalyses UMP + diphosphate = 5-phospho-alpha-D-ribose 1-diphosphate + uracil. The protein operates within pyrimidine metabolism; UMP biosynthesis via salvage pathway; UMP from uracil: step 1/1. Its activity is regulated as follows. Allosterically activated by GTP. Functionally, catalyzes the conversion of uracil and 5-phospho-alpha-D-ribose 1-diphosphate (PRPP) to UMP and diphosphate. This chain is Uracil phosphoribosyltransferase, found in Pseudomonas putida (strain ATCC 700007 / DSM 6899 / JCM 31910 / BCRC 17059 / LMG 24140 / F1).